The primary structure comprises 110 residues: MRQVTIPLIQSKSMFCVIYRSSKRDQTYLYVEKKDDFSRVPEALMKGFGQPQLAMMLPLDGRKKLVNAELEKVKQALSEQGYYLQLPPPPEDLLKQHLSSVGQNTSSADR.

The 85-residue stretch at 14-98 folds into the YcgL domain; that stretch reads MFCVIYRSSK…PPEDLLKQHL (85 aa). The interval 87-110 is disordered; that stretch reads PPPPEDLLKQHLSSVGQNTSSADR. A compositionally biased stretch (polar residues) spans 97 to 110; that stretch reads HLSSVGQNTSSADR.

The sequence is that of Protein YcgL from Salmonella newport (strain SL254).